We begin with the raw amino-acid sequence, 1578 residues long: Bromodomain-containing protein DDB_G0270170 (1578 aa).

Residues 1–12 (MSLEQQDETVVE) show a composition bias toward acidic residues. Disordered regions lie at residues 1–39 (MSLEQQDETVVEEETKTSFETNNSTANNTNNNTDNTYKE), 108–127 (NNNNGDENNKDIHDSSNNTE), 151–285 (HYSD…AKEL), and 319–454 (NENI…TTQT). The span at 18-35 (SFETNNSTANNTNNNTDN) shows a compositional bias: low complexity. The span at 152–163 (YSDDESSKEKQD) shows a compositional bias: basic and acidic residues. Low complexity-rich tracts occupy residues 164-185 (NINSNNNNNKNKNEQIINSENI) and 197-231 (TTPSDTPPTLTNNTSSTTTTTTTNNTTTAATTTTN). Composition is skewed to polar residues over residues 319–332 (NENIFSSSRKSTTK) and 340–351 (TASTTNTPIITA). Residues 352-383 (QQNTTPLSPTQTTTTTTTPTTTTAQQNTPAQT) show a composition bias toward low complexity. Residues 384–395 (ESKPPTTISINI) are compositionally biased toward polar residues. Composition is skewed to low complexity over residues 396–407 (KGSKSPKTTGGK) and 417–433 (VVISQPVVPSTPVVATT). Positions 443-454 (STANNNSETTQT) are enriched in polar residues. Residues 479–506 (SDSATIQQLQQSISMLEDKIRLISSNNK) adopt a coiled-coil conformation. 2 disordered regions span residues 543–565 (FTKSSTLAPPSSERKYSNLYSDD) and 580–730 (IPIP…RMGK). Composition is skewed to low complexity over residues 604-653 (NTST…PPQQ) and 660-686 (TQQENTSSTTTTTTTTTTTTNTEDTTT). In terms of domain architecture, Bromo spans 735–841 (VVLTPVFKRC…DVFEKGFPKV (107 aa)). Residues 851–903 (KNVDQEKIEKLSNDLKNVTKELEKFKKDDSNSINNNNNNNNNYNNNNNNNNNN) are a coiled coil. 4 disordered regions span residues 874-969 (KFKK…KVTT), 1039-1167 (HALP…NNNN), 1184-1452 (SIPE…TDSA), and 1480-1544 (EREE…KGNM). Composition is skewed to low complexity over residues 881 to 911 (NSINNNNNNNNNYNNNNNNNNNNSSSSSSRS), 918 to 961 (SSGS…SSNN), and 1047 to 1061 (SSTHSSHSSSHDSSS). Residues 957-1039 (SSSNNKKYPK…QYKNGEIPQH (83 aa)) enclose the NET domain. Residues 1064–1077 (REIEKLQKQLDRLG) are compositionally biased toward basic and acidic residues. Basic residues predominate over residues 1092–1107 (HSKRISKPISKARGRK). The span at 1112–1167 (SSSNLNNSSNNINNNNNNINNYNNNNNYNNNNNNNLNNNNNNNINSNLNNNLNNNN) shows a compositional bias: low complexity. The stretch at 1113–1150 (SSNLNNSSNNINNNNNNINNYNNNNNYNNNNNNNLNNN) forms a coiled coil. Positions 1192-1204 (TDISESSDSESDS) are enriched in acidic residues. Composition is skewed to low complexity over residues 1205–1218 (ESGSSDSSSSYSDS) and 1231–1334 (YNNS…SLTN). A coiled-coil region spans residues 1280 to 1308 (NSNNNNSNNNNNNVNNNNNNHNNNNHNNN). A compositionally biased stretch (polar residues) spans 1356–1369 (SVASWSFDPTNNKE). The span at 1370 to 1386 (SSSSSSTSSTSSTSNTT) shows a compositional bias: low complexity. Positions 1387–1399 (LTPIIQQSSLTHA) are enriched in polar residues. Composition is skewed to low complexity over residues 1400 to 1424 (SSPISSSTFVSFSSSSSTPPTNNLS) and 1432 to 1451 (NSPSINSPSSPSANNNNTDS). Residues 1462–1544 (TLKQKEKERV…EKLNNSKGNM (83 aa)) adopt a coiled-coil conformation. The segment covering 1480–1538 (EREEKEEELKKEEEKKRIEMEEIKRLAKEKEEREAEETRKQIESERAAAREAREKEKLN) has biased composition (basic and acidic residues).

The chain is Bromodomain-containing protein DDB_G0270170 from Dictyostelium discoideum (Social amoeba).